We begin with the raw amino-acid sequence, 108 residues long: ATPase inhibitor, mitochondrial (108 aa).

Residues 1–25 (MAATALAVRSRIGAWSVWAMQSRGF) constitute a mitochondrion transit peptide. The interval 25–48 (FSSDTPEGVRSGAGAVRDAGGAFG) is disordered. The segment at 26-52 (SSDTPEGVRSGAGAVRDAGGAFGKKEQ) is N-terminal inhibitory region. Positions 69 to 108 (ALKKHHENEISHHVKEIERLQKEIERHKQSIKKLKNDDDD) form a coiled coil. The interval 74 to 106 (HENEISHHVKEIERLQKEIERHKQSIKKLKNDD) is antiparallel alpha-helical coiled coil region. N6-succinyllysine is present on Lys-103.

The protein belongs to the ATPase inhibitor family. Homodimer; represents the active form and is present at a pH value below 6.5. Homotetramer; represents the inactive form and is present at a pH value above 7.0.

The protein resides in the mitochondrion. Endogenous F(1)F(o)-ATPase inhibitor limiting ATP depletion when the mitochondrial membrane potential falls below a threshold and the F(1)F(o)-ATP synthase starts hydrolyzing ATP to pump protons out of the mitochondrial matrix. Required to avoid the consumption of cellular ATP when the F(1)F(o)-ATP synthase enzyme acts as an ATP hydrolase. Indirectly acts as a regulator of heme synthesis in erythroid tissues: regulates heme synthesis by modulating the mitochondrial pH and redox potential, allowing FECH to efficiently catalyze the incorporation of iron into protoporphyrin IX to produce heme. The polypeptide is ATPase inhibitor, mitochondrial (Sus scrofa (Pig)).